The primary structure comprises 102 residues: RNA-binding protein Hfq (102 aa).

Positions 9–68 (DPFLNALRRERVPVSIYLVNGIKLQGQIESFDQFVILLKNTVSQMVYKHAISTVVPSRPV) constitute a Sm domain. The disordered stretch occupies residues 64 to 102 (PSRPVSHHSNTPSGGTSNYHHGNNPSAPQQPQQESDDAE). Polar residues predominate over residues 70–96 (HHSNTPSGGTSNYHHGNNPSAPQQPQQ).

The protein belongs to the Hfq family. As to quaternary structure, homohexamer.

Functionally, RNA chaperone that binds small regulatory RNA (sRNAs) and mRNAs to facilitate mRNA translational regulation in response to envelope stress, environmental stress and changes in metabolite concentrations. Also binds with high specificity to tRNAs. The sequence is that of RNA-binding protein Hfq from Serratia proteamaculans (strain 568).